Consider the following 195-residue polypeptide: Peptidyl-tRNA hydrolase (195 aa).

Tyr17 provides a ligand contact to tRNA. The active-site Proton acceptor is the His22. 3 residues coordinate tRNA: Tyr68, Asn70, and Asn116.

Belongs to the PTH family. In terms of assembly, monomer.

It localises to the cytoplasm. The enzyme catalyses an N-acyl-L-alpha-aminoacyl-tRNA + H2O = an N-acyl-L-amino acid + a tRNA + H(+). Hydrolyzes ribosome-free peptidyl-tRNAs (with 1 or more amino acids incorporated), which drop off the ribosome during protein synthesis, or as a result of ribosome stalling. Its function is as follows. Catalyzes the release of premature peptidyl moieties from peptidyl-tRNA molecules trapped in stalled 50S ribosomal subunits, and thus maintains levels of free tRNAs and 50S ribosomes. The protein is Peptidyl-tRNA hydrolase of Shewanella frigidimarina (strain NCIMB 400).